Here is a 241-residue protein sequence, read N- to C-terminus: UPF0173 metal-dependent hydrolase Haur_4333 (241 aa).

It belongs to the UPF0173 family.

The polypeptide is UPF0173 metal-dependent hydrolase Haur_4333 (Herpetosiphon aurantiacus (strain ATCC 23779 / DSM 785 / 114-95)).